Consider the following 427-residue polypeptide: Trigger factor (427 aa).

The PPIase FKBP-type domain occupies 163 to 248; it reads GDTVVIDFVG…IHEVKEKEVP (86 aa).

It belongs to the FKBP-type PPIase family. Tig subfamily.

It is found in the cytoplasm. It carries out the reaction [protein]-peptidylproline (omega=180) = [protein]-peptidylproline (omega=0). Its function is as follows. Involved in protein export. Acts as a chaperone by maintaining the newly synthesized protein in an open conformation. Functions as a peptidyl-prolyl cis-trans isomerase. The sequence is that of Trigger factor from Streptococcus sanguinis (strain SK36).